Here is a 210-residue protein sequence, read N- to C-terminus: Uridine kinase P10 (210 aa).

ATP is bound at residue 10-18 (GISGSGKST). Residue D41 is part of the active site.

Belongs to the uridine kinase family. In terms of assembly, interacts with host eIF-2B; this interaction disrupts the interaction between eIF2 and eIF-2B, which leads to the inhibition of stress granules formation.

The protein resides in the host cytoplasm. It is found in the host perinuclear region. The enzyme catalyses uridine + ATP = UMP + ADP + H(+). In terms of biological role, inhibits the integrated stress response (ISR) in the infected cell by preventing the sequestration of eIF2B by phosphorylated EIF2S1/eIF-2alpha. Stress granule formation in response to EIF2S1/eIF-2alpha phosphorylation is thus inhibited, which allows protein synthesis and viral replication. Phosphorylates uridine to uridine monophosphate. This chain is Uridine kinase P10 (ORF10), found in Beluga whale coronavirus (strain SW1) (BwCoV).